A 551-amino-acid chain; its full sequence is Calcium-dependent protein kinase 19 (551 aa).

G2 carries N-myristoyl glycine lipidation. Positions 12 to 46 (VKKPTPDISGEQNTEVKSREITPKEQPRQRQPAPR) are disordered. A compositionally biased stretch (basic and acidic residues) spans 25–39 (TEVKSREITPKEQPR). Residues 98-357 (YSLGRELGRG…AAQVLEHPWI (260 aa)) form the Protein kinase domain. Residues 104–112 (LGRGQFGIT) and K127 each bind ATP. Catalysis depends on D222, which acts as the Proton acceptor. S263 bears the Phosphoserine mark. Residues 363-393 (ASDKPIDSAVLSRMKQLRAMNKLKKLAFKFI) are autoinhibitory domain. 4 EF-hand domains span residues 400 to 435 (EELK…LGSR), 436 to 471 (LTET…RFRV), 472 to 507 (ERED…YNMG), and 512 to 542 (IKEI…CSQS). The Ca(2+) site is built by D413, D415, S417, T419, E424, D449, D451, N453, T455, E460, D485, D487, S489, E496, D520, D522, D524, S526, and E531.

It belongs to the protein kinase superfamily. Ser/Thr protein kinase family. CDPK subfamily.

The protein resides in the membrane. The enzyme catalyses L-seryl-[protein] + ATP = O-phospho-L-seryl-[protein] + ADP + H(+). The catalysed reaction is L-threonyl-[protein] + ATP = O-phospho-L-threonyl-[protein] + ADP + H(+). Its activity is regulated as follows. Activated by calcium. Autophosphorylation may play an important role in the regulation of the kinase activity. May play a role in signal transduction pathways that involve calcium as a second messenger. The polypeptide is Calcium-dependent protein kinase 19 (CPK19) (Arabidopsis thaliana (Mouse-ear cress)).